The chain runs to 347 residues: D-alanine--D-alanine ligase (347 aa).

In terms of domain architecture, ATP-grasp spans 134–332 (KLYAKDLGVK…LAQSLPKTPK (199 aa)). 161-216 (LMNFNFPFIIKPNNAGSSLGVNVVKEEKELVYALDGAFEYSKEVLIEPFIQGVKEY) contacts ATP. Positions 288, 300, and 302 each coordinate Mg(2+).

It belongs to the D-alanine--D-alanine ligase family. The cofactor is Mg(2+). It depends on Mn(2+) as a cofactor.

It localises to the cytoplasm. The enzyme catalyses 2 D-alanine + ATP = D-alanyl-D-alanine + ADP + phosphate + H(+). It functions in the pathway cell wall biogenesis; peptidoglycan biosynthesis. Cell wall formation. This Helicobacter pylori (strain ATCC 700392 / 26695) (Campylobacter pylori) protein is D-alanine--D-alanine ligase.